An 84-amino-acid chain; its full sequence is Small ribosomal subunit protein uS17 (84 aa).

The protein belongs to the universal ribosomal protein uS17 family. In terms of assembly, part of the 30S ribosomal subunit.

One of the primary rRNA binding proteins, it binds specifically to the 5'-end of 16S ribosomal RNA. The polypeptide is Small ribosomal subunit protein uS17 (Clostridium acetobutylicum (strain ATCC 824 / DSM 792 / JCM 1419 / IAM 19013 / LMG 5710 / NBRC 13948 / NRRL B-527 / VKM B-1787 / 2291 / W)).